The following is a 217-amino-acid chain: Probable GTP-binding protein EngB (217 aa).

An EngB-type G domain is found at 32–205 (GTPQIAFAGR…RKIVYSLIET (174 aa)). GTP-binding positions include 40–47 (GRSNAGKS), 67–71 (GKTKL), 85–88 (DLPG), 152–155 (TKID), and 184–186 (VSN). S47 and T69 together coordinate Mg(2+).

The protein belongs to the TRAFAC class TrmE-Era-EngA-EngB-Septin-like GTPase superfamily. EngB GTPase family. It depends on Mg(2+) as a cofactor.

In terms of biological role, necessary for normal cell division and for the maintenance of normal septation. This is Probable GTP-binding protein EngB from Leptospira interrogans serogroup Icterohaemorrhagiae serovar copenhageni (strain Fiocruz L1-130).